Here is a 269-residue protein sequence, read N- to C-terminus: Phosphatidylglycerol--prolipoprotein diacylglyceryl transferase (269 aa).

Helical transmembrane passes span 21 to 41 (WYGI…VLEG), 54 to 74 (LLLY…VVFE), and 88 to 108 (IWDG…VILI). Arg136 is an a 1,2-diacyl-sn-glycero-3-phospho-(1'-sn-glycerol) binding site. 2 helical membrane passes run 206 to 226 (GEVV…IEGM) and 236 to 256 (LRVS…AIFY).

The protein belongs to the Lgt family.

The protein localises to the cell membrane. It catalyses the reaction L-cysteinyl-[prolipoprotein] + a 1,2-diacyl-sn-glycero-3-phospho-(1'-sn-glycerol) = an S-1,2-diacyl-sn-glyceryl-L-cysteinyl-[prolipoprotein] + sn-glycerol 1-phosphate + H(+). Its pathway is protein modification; lipoprotein biosynthesis (diacylglyceryl transfer). Its function is as follows. Catalyzes the transfer of the diacylglyceryl group from phosphatidylglycerol to the sulfhydryl group of the N-terminal cysteine of a prolipoprotein, the first step in the formation of mature lipoproteins. In Ligilactobacillus salivarius (strain UCC118) (Lactobacillus salivarius), this protein is Phosphatidylglycerol--prolipoprotein diacylglyceryl transferase.